A 664-amino-acid chain; its full sequence is Transketolase 1 (664 aa).

His26 lines the substrate pocket. Thiamine diphosphate is bound by residues His66 and 114–116 (GPL). Asp155 serves as a coordination point for Mg(2+). Positions 156 and 185 each coordinate thiamine diphosphate. Residues Asn185 and Ile187 each coordinate Mg(2+). 3 residues coordinate substrate: His260, Arg357, and Ser384. His260 contacts thiamine diphosphate. Residue Glu411 is the Proton donor of the active site. Position 437 (Phe437) interacts with thiamine diphosphate. Positions 461, 469, and 520 each coordinate substrate.

The protein belongs to the transketolase family. Homodimer. Requires Mg(2+) as cofactor. It depends on Ca(2+) as a cofactor. Mn(2+) serves as cofactor. The cofactor is Co(2+). Thiamine diphosphate is required as a cofactor.

The enzyme catalyses D-sedoheptulose 7-phosphate + D-glyceraldehyde 3-phosphate = aldehydo-D-ribose 5-phosphate + D-xylulose 5-phosphate. Catalyzes the transfer of a two-carbon ketol group from a ketose donor to an aldose acceptor, via a covalent intermediate with the cofactor thiamine pyrophosphate. The polypeptide is Transketolase 1 (tkt1) (Vibrio vulnificus (strain CMCP6)).